A 380-amino-acid polypeptide reads, in one-letter code: Glucose-1-phosphate adenylyltransferase (380 aa).

Alpha-D-glucose 1-phosphate-binding positions include Gly164, 179–180 (EK), and Ser190.

The protein belongs to the bacterial/plant glucose-1-phosphate adenylyltransferase family. In terms of assembly, homotetramer.

It catalyses the reaction alpha-D-glucose 1-phosphate + ATP + H(+) = ADP-alpha-D-glucose + diphosphate. Its pathway is glycan biosynthesis; glycogen biosynthesis. In terms of biological role, involved in the biosynthesis of ADP-glucose, a building block required for the elongation reactions to produce glycogen. Catalyzes the reaction between ATP and alpha-D-glucose 1-phosphate (G1P) to produce pyrophosphate and ADP-Glc. This is Glucose-1-phosphate adenylyltransferase from Lactococcus lactis subsp. cremoris (strain SK11).